The chain runs to 198 residues: Recombination protein RecR (198 aa).

Residues cysteine 57–cysteine 72 form a C4-type zinc finger. The Toprim domain occupies serine 80–proline 175.

This sequence belongs to the RecR family.

In terms of biological role, may play a role in DNA repair. It seems to be involved in an RecBC-independent recombinational process of DNA repair. It may act with RecF and RecO. The sequence is that of Recombination protein RecR from Listeria welshimeri serovar 6b (strain ATCC 35897 / DSM 20650 / CCUG 15529 / CIP 8149 / NCTC 11857 / SLCC 5334 / V8).